The primary structure comprises 489 residues: Protein nucleotidyltransferase YdiU (489 aa).

ATP-binding residues include glycine 88, glycine 90, arginine 91, lysine 111, aspartate 123, glycine 124, arginine 174, and arginine 181. Catalysis depends on aspartate 250, which acts as the Proton acceptor. Mg(2+) contacts are provided by asparagine 251 and aspartate 260. Aspartate 260 contacts ATP.

This sequence belongs to the SELO family. Requires Mg(2+) as cofactor. The cofactor is Mn(2+).

It carries out the reaction L-seryl-[protein] + ATP = 3-O-(5'-adenylyl)-L-seryl-[protein] + diphosphate. The enzyme catalyses L-threonyl-[protein] + ATP = 3-O-(5'-adenylyl)-L-threonyl-[protein] + diphosphate. It catalyses the reaction L-tyrosyl-[protein] + ATP = O-(5'-adenylyl)-L-tyrosyl-[protein] + diphosphate. The catalysed reaction is L-histidyl-[protein] + UTP = N(tele)-(5'-uridylyl)-L-histidyl-[protein] + diphosphate. It carries out the reaction L-seryl-[protein] + UTP = O-(5'-uridylyl)-L-seryl-[protein] + diphosphate. The enzyme catalyses L-tyrosyl-[protein] + UTP = O-(5'-uridylyl)-L-tyrosyl-[protein] + diphosphate. Nucleotidyltransferase involved in the post-translational modification of proteins. It can catalyze the addition of adenosine monophosphate (AMP) or uridine monophosphate (UMP) to a protein, resulting in modifications known as AMPylation and UMPylation. This Vibrio parahaemolyticus serotype O3:K6 (strain RIMD 2210633) protein is Protein nucleotidyltransferase YdiU.